The chain runs to 218 residues: Large ribosomal subunit protein uL3c (218 aa).

Positions 127–161 (GFSRGPMTHGSKNHREPGSTGAGTTPGRIYPGKRM) are disordered.

Belongs to the universal ribosomal protein uL3 family. Part of the 50S ribosomal subunit.

Its subcellular location is the plastid. It is found in the organellar chromatophore. Its function is as follows. One of the primary rRNA binding proteins, it binds directly near the 3'-end of the 23S rRNA, where it nucleates assembly of the 50S subunit. The polypeptide is Large ribosomal subunit protein uL3c (rpl3) (Paulinella chromatophora).